Reading from the N-terminus, the 245-residue chain is Fibroblast growth factor 13 (245 aa).

A disordered region spans residues 1-36 (MAAAIASSLIRQKRQAREREKSNACKCVSSPSKGKT). Positions 1 to 62 (MAAAIASSLI…GSKKRRRRRP (62 aa)) are mediates targeting to the nucleus. The interval 67–201 (KGIVTKLYSR…AHFLPKPLKV (135 aa)) is mediates interaction with sodium channels. S208 carries the phosphoserine modification. The segment at 213–245 (TEFSRSGSGTPTKSRSVSGVLNGGKSMSHNEST) is disordered. Over residues 215-245 (FSRSGSGTPTKSRSVSGVLNGGKSMSHNEST) the composition is skewed to polar residues.

The protein belongs to the heparin-binding growth factors family. In terms of assembly, interacts with SCN8A; regulates SCN8A activity. Interacts with SCN1A; may regulate SCN1A activity. Interacts with SCN5A; the interaction is direct and may regulate SNC5A density at membranes and function. May also interact with SCN2A and SCN11A. Interacts with MAPK8IP2; may regulate the MAPK8IP2 scaffolding activity. In terms of processing, may be phosphorylated. As to expression, ubiquitously expressed. Predominantly expressed in the nervous system.

It localises to the nucleus. Its subcellular location is the cytoplasm. The protein resides in the cell projection. The protein localises to the filopodium. It is found in the growth cone. It localises to the dendrite. Its subcellular location is the cell membrane. The protein resides in the sarcolemma. In terms of biological role, microtubule-binding protein which directly binds tubulin and is involved in both polymerization and stabilization of microtubules. Through its action on microtubules, may participate in the refinement of axons by negatively regulating axonal and leading processes branching. Plays a crucial role in neuron polarization and migration in the cerebral cortex and the hippocampus. Regulates voltage-gated sodium channel transport and function. May also play a role in MAPK signaling. Required for the development of axonal initial segment-targeting inhibitory GABAergic synapses made by chandelier neurons. This is Fibroblast growth factor 13 from Homo sapiens (Human).